The sequence spans 218 residues: Acetyl- and succinyl-CoA transferase MT0822 (218 aa).

Residues 32-188 (DTILEGVHDP…EALLFRLTRD (157 aa)) form the N-acetyltransferase domain. Substrate-binding positions include Gln-94, 109–113 (SGSWL), 119–124 (GHGYGT), 145–151 (SRSFVDN), and Arg-160.

As to quaternary structure, dimer of dimers.

It carries out the reaction L-lysyl-[protein] + acetyl-CoA = N(6)-acetyl-L-lysyl-[protein] + CoA + H(+). The enzyme catalyses succinyl-CoA + L-lysyl-[protein] = N(6)-succinyl-L-lysyl-[protein] + CoA + H(+). Acetylates and succinylates nucleoid-associated, DNA-binding protein HupB. This chain is Acetyl- and succinyl-CoA transferase MT0822, found in Mycobacterium tuberculosis (strain CDC 1551 / Oshkosh).